The following is a 373-amino-acid chain: Queuine tRNA-ribosyltransferase (373 aa).

The Proton acceptor role is filled by Asp90. Substrate contacts are provided by residues 90–94 (DSGGF), Asp144, Gln193, and Gly220. Residues 251 to 257 (GVGTPED) are RNA binding. Asp270 acts as the Nucleophile in catalysis. The tract at residues 275–279 (TRNAR) is RNA binding; important for wobble base 34 recognition. Zn(2+) is bound by residues Cys308, Cys310, Cys313, and His339.

Belongs to the queuine tRNA-ribosyltransferase family. As to quaternary structure, homodimer. Within each dimer, one monomer is responsible for RNA recognition and catalysis, while the other monomer binds to the replacement base PreQ1. Zn(2+) serves as cofactor.

The catalysed reaction is 7-aminomethyl-7-carbaguanine + guanosine(34) in tRNA = 7-aminomethyl-7-carbaguanosine(34) in tRNA + guanine. It functions in the pathway tRNA modification; tRNA-queuosine biosynthesis. In terms of biological role, catalyzes the base-exchange of a guanine (G) residue with the queuine precursor 7-aminomethyl-7-deazaguanine (PreQ1) at position 34 (anticodon wobble position) in tRNAs with GU(N) anticodons (tRNA-Asp, -Asn, -His and -Tyr). Catalysis occurs through a double-displacement mechanism. The nucleophile active site attacks the C1' of nucleotide 34 to detach the guanine base from the RNA, forming a covalent enzyme-RNA intermediate. The proton acceptor active site deprotonates the incoming PreQ1, allowing a nucleophilic attack on the C1' of the ribose to form the product. After dissociation, two additional enzymatic reactions on the tRNA convert PreQ1 to queuine (Q), resulting in the hypermodified nucleoside queuosine (7-(((4,5-cis-dihydroxy-2-cyclopenten-1-yl)amino)methyl)-7-deazaguanosine). In Campylobacter lari (strain RM2100 / D67 / ATCC BAA-1060), this protein is Queuine tRNA-ribosyltransferase.